Reading from the N-terminus, the 231-residue chain is Large ribosomal subunit protein uL1 (231 aa).

The protein belongs to the universal ribosomal protein uL1 family. As to quaternary structure, part of the 50S ribosomal subunit.

Binds directly to 23S rRNA. The L1 stalk is quite mobile in the ribosome, and is involved in E site tRNA release. In terms of biological role, protein L1 is also a translational repressor protein, it controls the translation of the L11 operon by binding to its mRNA. The sequence is that of Large ribosomal subunit protein uL1 from Buchnera aphidicola subsp. Acyrthosiphon pisum (strain 5A).